The following is a 389-amino-acid chain: Alpha carbonic anhydrase 8 (389 aa).

The signal sequence occupies residues 1–22 (MKISSLGWVLVLIFISITIVSS). Residues 21 to 153 (SSAPAPKPPK…TKGNKGPAKW (133 aa)) are disordered. Positions 25 to 129 (APKPPKPKPA…PKPKPAPKPA (105 aa)) are enriched in pro residues. The Alpha-carbonic anhydrase domain occupies 138 to 374 (TEFSYETKGN…VNKRKVYLYK (237 aa)). Cys-163 and Cys-324 form a disulfide bridge. N-linked (GlcNAc...) asparagine glycosylation is present at Asn-196. Residue His-204 is the Proton acceptor of the active site. Zn(2+) contacts are provided by His-232, His-234, and His-251. 320 to 321 (TA) is a substrate binding site. N-linked (GlcNAc...) asparagine glycosylation is present at Asn-385.

Belongs to the alpha-class carbonic anhydrase family. The cofactor is Zn(2+). In terms of processing, N-glycosylated.

It is found in the plastid. Its subcellular location is the chloroplast stroma. The catalysed reaction is hydrogencarbonate + H(+) = CO2 + H2O. In terms of biological role, reversible hydration of carbon dioxide. The protein is Alpha carbonic anhydrase 8 (ACA8) of Arabidopsis thaliana (Mouse-ear cress).